The sequence spans 296 residues: Cytidine deaminase (296 aa).

2 CMP/dCMP-type deaminase domains span residues 47 to 167 (TEAE…FGPK) and 186 to 296 (DSSD…VDPV). 88 to 90 (NLE) is a substrate binding site. A Zn(2+)-binding site is contributed by His101. Glu103 (proton donor) is an active-site residue. Cys128 and Cys131 together coordinate Zn(2+).

Belongs to the cytidine and deoxycytidylate deaminase family. Homodimer. The cofactor is Zn(2+).

It catalyses the reaction cytidine + H2O + H(+) = uridine + NH4(+). The catalysed reaction is 2'-deoxycytidine + H2O + H(+) = 2'-deoxyuridine + NH4(+). Its function is as follows. This enzyme scavenges exogenous and endogenous cytidine and 2'-deoxycytidine for UMP synthesis. This is Cytidine deaminase from Shewanella sp. (strain ANA-3).